The chain runs to 368 residues: Xaa-Pro dipeptidase (368 aa).

Mn(2+) is bound by residues Asp-223, Asp-234, His-298, Glu-327, and Glu-341.

It belongs to the peptidase M24B family. Requires Mn(2+) as cofactor.

The protein localises to the cytoplasm. It catalyses the reaction Xaa-L-Pro dipeptide + H2O = an L-alpha-amino acid + L-proline. The chain is Xaa-Pro dipeptidase (pepQ) from Lactobacillus delbrueckii subsp. lactis.